The sequence spans 66 residues: Large ribosomal subunit protein bL35 (66 aa).

This sequence belongs to the bacterial ribosomal protein bL35 family.

The sequence is that of Large ribosomal subunit protein bL35 from Synechococcus sp. (strain ATCC 27144 / PCC 6301 / SAUG 1402/1) (Anacystis nidulans).